The chain runs to 216 residues: Maleylacetoacetate isomerase (216 aa).

Met1 carries the N-acetylmethionine modification. In terms of domain architecture, GST N-terminal spans Gly4–Arg87. Glutathione-binding positions include Ser14–Arg19 and Gln45. Lys57 bears the N6-succinyllysine mark. Glutathione is bound by residues Val59, Gln71–Ser72, Gln111, and Asn115–Ser117. The 121-residue stretch at Asp92–Ala212 folds into the GST C-terminal domain. Residue Thr136 is modified to Phosphothreonine. Ser137 is modified (phosphoserine). Lys177 bears the N6-succinyllysine mark. Position 181 is a phosphoserine (Ser181).

It belongs to the GST superfamily. Zeta family. Homodimer. Glutathione is required as a cofactor. Post-translationally, the N-terminus is blocked.

The protein localises to the cytoplasm. It carries out the reaction 4-maleylacetoacetate = 4-fumarylacetoacetate. It catalyses the reaction RX + glutathione = an S-substituted glutathione + a halide anion + H(+). The protein operates within amino-acid degradation; L-phenylalanine degradation; acetoacetate and fumarate from L-phenylalanine: step 5/6. In terms of biological role, probable bifunctional enzyme showing minimal glutathione-conjugating activity with ethacrynic acid and 7-chloro-4-nitrobenz-2-oxa-1, 3-diazole and maleylacetoacetate isomerase activity. Also has low glutathione peroxidase activity with t-butyl and cumene hydroperoxides. Is able to catalyze the glutathione dependent oxygenation of dichloroacetic acid to glyoxylic acid. In Rattus norvegicus (Rat), this protein is Maleylacetoacetate isomerase (Gstz1).